The primary structure comprises 613 residues: Autophagy-related protein 22-2 (613 aa).

The tract at residues 1-30 is disordered; sequence MAFNSTPPVSPGGEAQQRPPRFPGEDTTPT. Residues 41–61 traverse the membrane as a helical segment; it reads YGIAAEVFAVCGVGSFLPLTL. Asparagine 90 is a glycosylation site (N-linked (GlcNAc...) asparagine). The next 7 membrane-spanning stretches (helical) occupy residues 120 to 140, 167 to 187, 189 to 209, 278 to 298, 307 to 327, 382 to 402, and 418 to 438; these read SFAMYTFSLAVLVQALTLISF, LFIFIAPPVYILASLLVVVGV, CLGSSFVVLNSFLPVLVANDP, VGLGYCAAVLVQILSILMLFA, ISGTLPLRFVLLLVGIWWFSF, VIIFLIAWFLLSDAMATVSGT, and VGLLSITATLSGMAGAFLWPV. N-linked (GlcNAc...) asparagine glycosylation occurs at asparagine 448. The next 4 helical transmembrane spans lie at 453 to 473, 477 to 497, 508 to 528, and 553 to 573; these read LCIALFEVIPLYGMLAYIPLF, GVVGLQQPWEIFPLGIVHGLV, FFGLLIPPGSEAAFYALYAAT, and GFFFIAVLILLPIPLIWMVNA. The segment at 592–613 is disordered; it reads REHASEYGGPSEEAEGLLARDI.

The protein belongs to the ATG22 family.

The protein resides in the vacuole membrane. Functionally, vacuolar effluxer which mediate the efflux of amino acids resulting from autophagic degradation. The release of autophagic amino acids allows the maintenance of protein synthesis and viability during nitrogen starvation. The sequence is that of Autophagy-related protein 22-2 (atg22-2) from Aspergillus fumigatus (strain ATCC MYA-4609 / CBS 101355 / FGSC A1100 / Af293) (Neosartorya fumigata).